A 76-amino-acid chain; its full sequence is uncharacterized protein (76 aa).

2 consecutive transmembrane segments (helical) span residues 9–29 (AIGI…LQAV) and 45–65 (LLMI…FLDY).

The protein localises to the cell membrane. This is an uncharacterized protein from Bacillus subtilis (strain 168).